We begin with the raw amino-acid sequence, 509 residues long: Bifunctional purine biosynthesis protein PurH (509 aa).

Residues 1 to 144 (MKRALISVSD…KNYAAVTVVV (144 aa)) enclose the MGS-like domain.

Belongs to the PurH family.

It catalyses the reaction (6R)-10-formyltetrahydrofolate + 5-amino-1-(5-phospho-beta-D-ribosyl)imidazole-4-carboxamide = 5-formamido-1-(5-phospho-D-ribosyl)imidazole-4-carboxamide + (6S)-5,6,7,8-tetrahydrofolate. The catalysed reaction is IMP + H2O = 5-formamido-1-(5-phospho-D-ribosyl)imidazole-4-carboxamide. It functions in the pathway purine metabolism; IMP biosynthesis via de novo pathway; 5-formamido-1-(5-phospho-D-ribosyl)imidazole-4-carboxamide from 5-amino-1-(5-phospho-D-ribosyl)imidazole-4-carboxamide (10-formyl THF route): step 1/1. The protein operates within purine metabolism; IMP biosynthesis via de novo pathway; IMP from 5-formamido-1-(5-phospho-D-ribosyl)imidazole-4-carboxamide: step 1/1. This is Bifunctional purine biosynthesis protein PurH from Listeria innocua serovar 6a (strain ATCC BAA-680 / CLIP 11262).